A 465-amino-acid chain; its full sequence is Cysteine--tRNA ligase (465 aa).

Cys27 is a binding site for Zn(2+). The 'HIGH' region signature appears at 29–39 (PTVYDEVHIGH). The Zn(2+) site is built by Cys204, His229, and Glu233. Residues 261-265 (KMSKS) carry the 'KMSKS' region motif. An ATP-binding site is contributed by Lys264.

Belongs to the class-I aminoacyl-tRNA synthetase family. Zn(2+) is required as a cofactor.

Its subcellular location is the cytoplasm. It carries out the reaction tRNA(Cys) + L-cysteine + ATP = L-cysteinyl-tRNA(Cys) + AMP + diphosphate. The protein is Cysteine--tRNA ligase of Metallosphaera sedula (strain ATCC 51363 / DSM 5348 / JCM 9185 / NBRC 15509 / TH2).